A 101-amino-acid polypeptide reads, in one-letter code: Large ribosomal subunit protein uL23 (101 aa).

Belongs to the universal ribosomal protein uL23 family. In terms of assembly, part of the 50S ribosomal subunit. Contacts protein L29, and trigger factor when it is bound to the ribosome.

One of the early assembly proteins it binds 23S rRNA. One of the proteins that surrounds the polypeptide exit tunnel on the outside of the ribosome. Forms the main docking site for trigger factor binding to the ribosome. The polypeptide is Large ribosomal subunit protein uL23 (Corynebacterium diphtheriae (strain ATCC 700971 / NCTC 13129 / Biotype gravis)).